The chain runs to 504 residues: D-alanine--D-alanyl carrier protein ligase (504 aa).

152 to 153 (TS) serves as a coordination point for ATP. A D-alanine-binding site is contributed by Asp197. An ATP-binding site is contributed by 292–297 (NTYGPT). Val301 provides a ligand contact to D-alanine. ATP-binding positions include Asp383, 394–397 (YNGR), and Lys492. Lys492 contacts D-alanine.

Belongs to the ATP-dependent AMP-binding enzyme family. DltA subfamily.

It localises to the cytoplasm. The enzyme catalyses holo-[D-alanyl-carrier protein] + D-alanine + ATP = D-alanyl-[D-alanyl-carrier protein] + AMP + diphosphate. Its pathway is cell wall biogenesis; lipoteichoic acid biosynthesis. Its function is as follows. Catalyzes the first step in the D-alanylation of lipoteichoic acid (LTA), the activation of D-alanine and its transfer onto the D-alanyl carrier protein (Dcp) DltC. In an ATP-dependent two-step reaction, forms a high energy D-alanyl-AMP intermediate, followed by transfer of the D-alanyl residue as a thiol ester to the phosphopantheinyl prosthetic group of the Dcp. D-alanylation of LTA plays an important role in modulating the properties of the cell wall in Gram-positive bacteria, influencing the net charge of the cell wall. The chain is D-alanine--D-alanyl carrier protein ligase from Bacillus cereus (strain B4264).